The following is a 434-amino-acid chain: Trigger factor (434 aa).

The region spanning 161 to 246 is the PPIase FKBP-type domain; that stretch reads EDRVTVDFNG…LKKVEERELP (86 aa).

Belongs to the FKBP-type PPIase family. Tig subfamily.

The protein localises to the cytoplasm. It carries out the reaction [protein]-peptidylproline (omega=180) = [protein]-peptidylproline (omega=0). Functionally, involved in protein export. Acts as a chaperone by maintaining the newly synthesized protein in an open conformation. Functions as a peptidyl-prolyl cis-trans isomerase. This is Trigger factor from Proteus mirabilis (strain HI4320).